The sequence spans 101 residues: Large ribosomal subunit protein bL27 (101 aa).

A propeptide spanning residues 1-9 (MLLMNLQLF) is cleaved from the precursor.

This sequence belongs to the bacterial ribosomal protein bL27 family. Post-translationally, the N-terminus is cleaved by ribosomal processing cysteine protease Prp.

The sequence is that of Large ribosomal subunit protein bL27 from Clostridium tetani (strain Massachusetts / E88).